A 67-amino-acid polypeptide reads, in one-letter code: Conotoxin AbVIN (67 aa).

The N-terminal stretch at 1–17 (VIIIAVLFLTACQLIAT) is a signal peptide. The propeptide occupies 18 to 40 (ASYARSERKHPDLRLSSRNSKLS). 3 disulfides stabilise this stretch: Cys-43-Cys-57, Cys-50-Cys-61, and Cys-56-Cys-66.

The protein belongs to the conotoxin O1 superfamily. As to expression, expressed by the venom duct.

The protein resides in the secreted. The polypeptide is Conotoxin AbVIN (Conus abbreviatus (Abbreviated cone)).